A 183-amino-acid chain; its full sequence is Adenylate kinase (183 aa).

7–15 (GVAGVGKTT) is a binding site for ATP.

It belongs to the archaeal adenylate kinase family.

It is found in the cytoplasm. It catalyses the reaction AMP + ATP = 2 ADP. This Thermoplasma acidophilum (strain ATCC 25905 / DSM 1728 / JCM 9062 / NBRC 15155 / AMRC-C165) protein is Adenylate kinase (adkA).